The following is a 95-amino-acid chain: Large ribosomal subunit protein uL23 (95 aa).

Belongs to the universal ribosomal protein uL23 family. Part of the 50S ribosomal subunit. Contacts protein L29, and trigger factor when it is bound to the ribosome.

One of the early assembly proteins it binds 23S rRNA. One of the proteins that surrounds the polypeptide exit tunnel on the outside of the ribosome. Forms the main docking site for trigger factor binding to the ribosome. The protein is Large ribosomal subunit protein uL23 of Solibacter usitatus (strain Ellin6076).